Reading from the N-terminus, the 279-residue chain is Lectin 9 (279 aa).

Positions 1–23 (MALSSALIKIFITFLFLQNHVNS) are cleaved as a signal peptide. Residues asparagine 116, asparagine 139, asparagine 235, and asparagine 272 are each glycosylated (N-linked (GlcNAc...) asparagine).

This sequence belongs to the leguminous lectin family.

May be involved in arbuscular mycorrhizal (AM) symbiosis with AM fungi. The sequence is that of Lectin 9 from Medicago truncatula (Barrel medic).